A 327-amino-acid polypeptide reads, in one-letter code: L-lactate dehydrogenase (327 aa).

Residues V18, D39, K44, Y69, and 83–84 (GA) contribute to the NAD(+) site. Substrate-binding positions include Q86, R92, and 124–127 (NPVD). NAD(+) contacts are provided by residues 122–124 (AAN) and S147. 152-155 (DSAR) contributes to the substrate binding site. Residues R157 and H172 each contribute to the beta-D-fructose 1,6-bisphosphate site. The Proton acceptor role is filled by H179. Y224 is modified (phosphotyrosine). T233 contacts substrate.

The protein belongs to the LDH/MDH superfamily. LDH family. In terms of assembly, homotetramer.

The protein resides in the cytoplasm. The enzyme catalyses (S)-lactate + NAD(+) = pyruvate + NADH + H(+). It functions in the pathway fermentation; pyruvate fermentation to lactate; (S)-lactate from pyruvate: step 1/1. Allosterically activated by fructose 1,6-bisphosphate (FBP). In terms of biological role, catalyzes the conversion of lactate to pyruvate. The sequence is that of L-lactate dehydrogenase from Streptococcus equi subsp. zooepidemicus (strain H70).